We begin with the raw amino-acid sequence, 276 residues long: Insulin-like growth factor-binding protein 2-A (276 aa).

Residues 1–22 (MLSYVSCGLLLALVTFHGTARS) form the signal peptide. Residues 24–105 (MVFRCPSCTA…VQGLGRCGRK (82 aa)) form the IGFBP N-terminal domain. Disulfide bonds link cysteine 28/cysteine 55, cysteine 31/cysteine 57, cysteine 39/cysteine 58, cysteine 46/cysteine 61, cysteine 69/cysteine 82, cysteine 76/cysteine 102, cysteine 180/cysteine 214, cysteine 225/cysteine 236, and cysteine 238/cysteine 259. The Thyroglobulin type-1 domain occupies 177 to 259 (QSQCQQELDQ…SPLIRGDPNC (83 aa)). The Cell attachment site motif lies at 254-256 (RGD).

As to quaternary structure, interacts equally well with igf1 and igf2. In terms of tissue distribution, in embryos at 24 hpf, initially expressed in the lens and cranial region, and at 48 and 72 hpf in the brain boundary vasculature. Expression in these regions persists throughout the hatching period and by 96 hpf expression is most abundant in the liver. In both male and female adults, highest expression is in the liver with modest expression in the brain. In male but not females adults, expressed at a low level in muscle and gonad. Also expressed in the adult intestine.

It is found in the secreted. In terms of biological role, IGF-binding proteins prolong the half-life of the IGFs and have been shown to either inhibit or stimulate the growth promoting effects of the IGFs on cell culture. They alter the interaction of IGFs with their cell surface receptors. The chain is Insulin-like growth factor-binding protein 2-A (igfbp2a) from Danio rerio (Zebrafish).